Reading from the N-terminus, the 786-residue chain is Protein translocase subunit SecA 1 (786 aa).

ATP is bound by residues Gln85, 103–107, and Asp491; that span reads GEGKT.

It belongs to the SecA family. Monomer and homodimer. Part of the essential Sec protein translocation apparatus which comprises SecA, SecYEG and auxiliary proteins SecDF. Other proteins may also be involved.

It is found in the cell membrane. The protein localises to the cytoplasm. The enzyme catalyses ATP + H2O + cellular proteinSide 1 = ADP + phosphate + cellular proteinSide 2.. Part of the Sec protein translocase complex. Interacts with the SecYEG preprotein conducting channel. Has a central role in coupling the hydrolysis of ATP to the transfer of proteins into and across the cell membrane, serving as an ATP-driven molecular motor driving the stepwise translocation of polypeptide chains across the membrane. This is Protein translocase subunit SecA 1 from Pediococcus pentosaceus (strain ATCC 25745 / CCUG 21536 / LMG 10740 / 183-1w).